We begin with the raw amino-acid sequence, 308 residues long: Porphobilinogen deaminase (308 aa).

Cysteine 240 bears the S-(dipyrrolylmethanemethyl)cysteine mark.

Belongs to the HMBS family. In terms of assembly, monomer. The cofactor is dipyrromethane.

It catalyses the reaction 4 porphobilinogen + H2O = hydroxymethylbilane + 4 NH4(+). It functions in the pathway porphyrin-containing compound metabolism; protoporphyrin-IX biosynthesis; coproporphyrinogen-III from 5-aminolevulinate: step 2/4. In terms of biological role, tetrapolymerization of the monopyrrole PBG into the hydroxymethylbilane pre-uroporphyrinogen in several discrete steps. The sequence is that of Porphobilinogen deaminase from Campylobacter hominis (strain ATCC BAA-381 / DSM 21671 / CCUG 45161 / LMG 19568 / NCTC 13146 / CH001A).